A 106-amino-acid chain; its full sequence is NADH dehydrogenase [ubiquinone] 1 alpha subcomplex subunit 8-B (106 aa).

S2 carries the post-translational modification N-acetylserine. CHCH domains are found at residues 26 to 67 (GMRC…LKDL) and 68 to 106 (HQKCQKEMDDYVGCMYYYTNEFDLCRKEQEAFEKVCPLK). Short sequence motifs (cx9C motif) lie at residues 29-39 (CMPENVAFLKC), 49-59 (CLDKGRDVTRC), and 71-81 (CQKEMDDYVGC). Disulfide bonds link C29-C59, C39-C49, C71-C103, and C81-C92. The short motif at 92 to 103 (CRKEQEAFEKVC) is the Cx10C motif element.

This sequence belongs to the complex I NDUFA8 subunit family. In terms of assembly, complex I is composed of at least 49 different subunits.

Its subcellular location is the mitochondrion. It localises to the mitochondrion intermembrane space. Its function is as follows. Accessory subunit of the mitochondrial membrane respiratory chain NADH dehydrogenase (Complex I), that is believed not to be involved in catalysis. Complex I functions in the transfer of electrons from NADH to the respiratory chain. The immediate electron acceptor for the enzyme is believed to be ubiquinone. The polypeptide is NADH dehydrogenase [ubiquinone] 1 alpha subcomplex subunit 8-B (Arabidopsis thaliana (Mouse-ear cress)).